The chain runs to 719 residues: Polyribonucleotide nucleotidyltransferase (719 aa).

The Mg(2+) site is built by Asp-491 and Asp-497. Residues 558–617 (PRMLTIKINPEKIRDVIGKGGATIRALTEETGTQIDISDDGTIVIASVDEAQAKEAQRRI) enclose the KH domain. The S1 motif domain occupies 627–695 (GQVYDGSVLR…DKGRLRLSVK (69 aa)).

The protein belongs to the polyribonucleotide nucleotidyltransferase family. Mg(2+) is required as a cofactor.

Its subcellular location is the cytoplasm. The catalysed reaction is RNA(n+1) + phosphate = RNA(n) + a ribonucleoside 5'-diphosphate. Its function is as follows. Involved in mRNA degradation. Catalyzes the phosphorolysis of single-stranded polyribonucleotides processively in the 3'- to 5'-direction. The chain is Polyribonucleotide nucleotidyltransferase from Bordetella petrii (strain ATCC BAA-461 / DSM 12804 / CCUG 43448).